The following is a 305-amino-acid chain: Glycine--tRNA ligase alpha subunit (305 aa).

It belongs to the class-II aminoacyl-tRNA synthetase family. In terms of assembly, tetramer of two alpha and two beta subunits.

It localises to the cytoplasm. The enzyme catalyses tRNA(Gly) + glycine + ATP = glycyl-tRNA(Gly) + AMP + diphosphate. The chain is Glycine--tRNA ligase alpha subunit from Streptococcus pyogenes serotype M2 (strain MGAS10270).